The sequence spans 673 residues: Protein transport Sec1a (673 aa).

Residues 538–591 (SSHKEESEARTGSVRKSSAPTAVPERKATPHSMRSRRTATWARPHSSDDGYSSD) form a disordered region.

This sequence belongs to the STXBP/unc-18/SEC1 family. In terms of assembly, does not bind the syntaxin KNOLLE.

In terms of biological role, involved in the vesicle trafficking. Binds syntaxins. In Arabidopsis thaliana (Mouse-ear cress), this protein is Protein transport Sec1a (SEC1A).